Consider the following 334-residue polypeptide: tRNA N6-adenosine threonylcarbamoyltransferase (334 aa).

Fe cation is bound by residues histidine 112 and histidine 116. Substrate is bound by residues 135–139 (VVSGG), aspartate 168, glycine 181, aspartate 185, and asparagine 274. Aspartate 303 serves as a coordination point for Fe cation.

Belongs to the KAE1 / TsaD family. Fe(2+) serves as cofactor.

It is found in the cytoplasm. It carries out the reaction L-threonylcarbamoyladenylate + adenosine(37) in tRNA = N(6)-L-threonylcarbamoyladenosine(37) in tRNA + AMP + H(+). Required for the formation of a threonylcarbamoyl group on adenosine at position 37 (t(6)A37) in tRNAs that read codons beginning with adenine. Is involved in the transfer of the threonylcarbamoyl moiety of threonylcarbamoyl-AMP (TC-AMP) to the N6 group of A37, together with TsaE and TsaB. TsaD likely plays a direct catalytic role in this reaction. This chain is tRNA N6-adenosine threonylcarbamoyltransferase, found in Anaeromyxobacter dehalogenans (strain 2CP-1 / ATCC BAA-258).